The following is a 299-amino-acid chain: Zinc-alpha-2-glycoprotein (299 aa).

Positions 1-17 are cleaved as a signal peptide; that stretch reads MVPVLLALLLLLGPAVS. N-linked (GlcNAc...) asparagine glycans are attached at residues Asn24, Asn125, and Asn256. Intrachain disulfides connect Cys120–Cys183 and Cys222–Cys277. The Ig-like C1-type domain maps to 204–289; that stretch reads PSVSVTGHAA…EHRSLTRPLT (86 aa).

It belongs to the MHC class I family. Interacts with PIP.

It is found in the secreted. In terms of biological role, stimulates lipid degradation in adipocytes and causes the extensive fat losses associated with some advanced cancers. The polypeptide is Zinc-alpha-2-glycoprotein (AZGP1) (Bos taurus (Bovine)).